Reading from the N-terminus, the 101-residue chain is uncharacterized protein (101 aa).

A helical membrane pass occupies residues 70–90 (VLFIPIILLLPPSCPLTGVTV).

It localises to the membrane. This is an uncharacterized protein from Saccharomyces cerevisiae (strain ATCC 204508 / S288c) (Baker's yeast).